Consider the following 226-residue polypeptide: Ribonuclease 3 (226 aa).

In terms of domain architecture, RNase III spans 6-128 (INRLQRKLGY…LIGGIFLDSD (123 aa)). Residue Glu41 coordinates Mg(2+). The active site involves Asp45. The Mg(2+) site is built by Asp114 and Glu117. Residue Glu117 is part of the active site. Positions 155–225 (DPKTRLQEFL…AEQALKQLEL (71 aa)) constitute a DRBM domain.

This sequence belongs to the ribonuclease III family. Homodimer. Mg(2+) serves as cofactor.

The protein resides in the cytoplasm. The enzyme catalyses Endonucleolytic cleavage to 5'-phosphomonoester.. Its function is as follows. Digests double-stranded RNA. Involved in the processing of primary rRNA transcript to yield the immediate precursors to the large and small rRNAs (23S and 16S). Processes some mRNAs, and tRNAs when they are encoded in the rRNA operon. Processes pre-crRNA and tracrRNA of type II CRISPR loci if present in the organism. The polypeptide is Ribonuclease 3 (Edwardsiella ictaluri (strain 93-146)).